The sequence spans 513 residues: Calcium-dependent protein kinase 2 (513 aa).

Residues 65 to 323 form the Protein kinase domain; the sequence is YSFGKELGRG…SAQVLQHQWL (259 aa). ATP contacts are provided by residues 71 to 79 and Lys-94; that span reads LGRGQFGVT. The Proton acceptor role is filled by Asp-189. An autoinhibitory domain region spans residues 329–359; that stretch reads ASDKPIDSAVLSRMKQFRAMNKLKKMALKVI. 4 EF-hand domains span residues 366 to 401, 402 to 437, 438 to 473, and 478 to 508; these read EEIKGLKQMFMNMDTDNSGTITYEELKAGLAKLGSK, LSEAEVKQLMEAADVDGNGSIDYVEFITATMHRHKL, ERDEHLFKAFQYFDKDNSGFITRDELESALIEHEMG, and IREIISEVDTDNDGRINYEEFCAMMRGGMQQ. 19 residues coordinate Ca(2+): Asp-379, Asp-381, Ser-383, Thr-385, Glu-390, Asp-415, Asp-417, Asn-419, Ser-421, Glu-426, Asp-451, Asp-453, Ser-455, Glu-462, Asp-486, Asp-488, Asp-490, Arg-492, and Glu-497.

This sequence belongs to the protein kinase superfamily. Ser/Thr protein kinase family. CDPK subfamily.

The catalysed reaction is L-seryl-[protein] + ATP = O-phospho-L-seryl-[protein] + ADP + H(+). It catalyses the reaction L-threonyl-[protein] + ATP = O-phospho-L-threonyl-[protein] + ADP + H(+). Its activity is regulated as follows. Activated by calcium. Autophosphorylation may play an important role in the regulation of the kinase activity. May play a role in signal transduction pathways that involve calcium as a second messenger. The polypeptide is Calcium-dependent protein kinase 2 (CPK2) (Zea mays (Maize)).